Consider the following 332-residue polypeptide: Putative peptide import ATP-binding protein BruAb2_1033 (332 aa).

Residues 11-261 (LEVSNLSVDF…PLHPYTEGLL (251 aa)) enclose the ABC transporter domain. An ATP-binding site is contributed by 47–54 (GESGSGKS).

The protein belongs to the ABC transporter superfamily. As to quaternary structure, the complex is composed of two ATP-binding proteins (BruAb2_1033 and BruAb2_1034), two transmembrane proteins (BruAb2_1031 and BruAb2_1032) and a solute-binding protein (BruAb2_1030).

The protein resides in the cell inner membrane. Functionally, probably part of an ABC transporter complex that could be involved in peptide import. Probably responsible for energy coupling to the transport system. This Brucella abortus biovar 1 (strain 9-941) protein is Putative peptide import ATP-binding protein BruAb2_1033.